Consider the following 272-residue polypeptide: Cerberus (272 aa).

Positions 1-17 are cleaved as a signal peptide; it reads MHLLLVQLLVLLPLGKA. 4 cysteine pairs are disulfide-bonded: Cys-162–Cys-209, Cys-176–Cys-223, Cys-186–Cys-239, and Cys-190–Cys-241. The CTCK domain occupies 162–246; that stretch reads CRTVPFNQTI…EECQCMVKTE (85 aa). Asn-168 and Asn-222 each carry an N-linked (GlcNAc...) asparagine glycan.

This sequence belongs to the DAN family. As to quaternary structure, forms monomers and predominantly dimers. N-glycosylated.

The protein localises to the secreted. Cytokine that may play a role in anterior neural induction and somite formation during embryogenesis in part, through a BMP-inhibitory mechanism. Can regulate Nodal signaling during gastrulation as well as the formation and patterning of the primitive streak. This chain is Cerberus (Cer1), found in Mus musculus (Mouse).